We begin with the raw amino-acid sequence, 677 residues long: Methionine--tRNA ligase (677 aa).

The 'HIGH' region signature appears at 15-25 (PYANGSIHLGH). Residues cysteine 146, cysteine 149, cysteine 159, and cysteine 162 each contribute to the Zn(2+) site. The short motif at 333–337 (KMSKS) is the 'KMSKS' region element. Position 336 (lysine 336) interacts with ATP. In terms of domain architecture, tRNA-binding spans 575-677 (DFAKVDLRVA…AGAKPGHQVK (103 aa)).

Belongs to the class-I aminoacyl-tRNA synthetase family. MetG type 1 subfamily. In terms of assembly, homodimer. The cofactor is Zn(2+).

It localises to the cytoplasm. The enzyme catalyses tRNA(Met) + L-methionine + ATP = L-methionyl-tRNA(Met) + AMP + diphosphate. Is required not only for elongation of protein synthesis but also for the initiation of all mRNA translation through initiator tRNA(fMet) aminoacylation. The polypeptide is Methionine--tRNA ligase (Shigella boydii serotype 18 (strain CDC 3083-94 / BS512)).